The sequence spans 119 residues: Holo-[acyl-carrier-protein] synthase (119 aa).

Mg(2+) contacts are provided by aspartate 8 and glutamate 60.

This sequence belongs to the P-Pant transferase superfamily. AcpS family. Requires Mg(2+) as cofactor.

It localises to the cytoplasm. The enzyme catalyses apo-[ACP] + CoA = holo-[ACP] + adenosine 3',5'-bisphosphate + H(+). Functionally, transfers the 4'-phosphopantetheine moiety from coenzyme A to a Ser of acyl-carrier-protein. The polypeptide is Holo-[acyl-carrier-protein] synthase (Mycoplasma pneumoniae (strain ATCC 29342 / M129 / Subtype 1) (Mycoplasmoides pneumoniae)).